The primary structure comprises 266 residues: Glutamate racemase (266 aa).

Residues 9–10 and 41–42 each bind substrate; these read DS and YG. Cysteine 72 functions as the Proton donor/acceptor in the catalytic mechanism. 73–74 lines the substrate pocket; it reads NT. Cysteine 183 (proton donor/acceptor) is an active-site residue. 184-185 is a substrate binding site; sequence TH.

This sequence belongs to the aspartate/glutamate racemases family.

The catalysed reaction is L-glutamate = D-glutamate. Its pathway is cell wall biogenesis; peptidoglycan biosynthesis. Provides the (R)-glutamate required for cell wall biosynthesis. The polypeptide is Glutamate racemase (Listeria monocytogenes serotype 4a (strain HCC23)).